The primary structure comprises 558 residues: Potassium-transporting ATPase potassium-binding subunit (558 aa).

Transmembrane regions (helical) follow at residues Leu-2 to Leu-22, Val-66 to Phe-86, Ala-135 to Ile-155, Ile-177 to Thr-197, Leu-253 to Met-273, Gly-280 to Val-300, Phe-327 to Val-347, Leu-354 to Gly-374, Gly-378 to Gly-398, Ile-413 to Ile-433, Leu-482 to Leu-502, and Gly-528 to Leu-548.

Belongs to the KdpA family. The system is composed of three essential subunits: KdpA, KdpB and KdpC.

The protein resides in the cell inner membrane. Part of the high-affinity ATP-driven potassium transport (or Kdp) system, which catalyzes the hydrolysis of ATP coupled with the electrogenic transport of potassium into the cytoplasm. This subunit binds the periplasmic potassium ions and delivers the ions to the membrane domain of KdpB through an intramembrane tunnel. The sequence is that of Potassium-transporting ATPase potassium-binding subunit from Synechocystis sp. (strain ATCC 27184 / PCC 6803 / Kazusa).